Here is a 185-residue protein sequence, read N- to C-terminus: ATP synthase subunit b 2 (185 aa).

The disordered stretch occupies residues 1-24; sequence MADSHGNAKGATAHTEAGGGHKAP. A helical transmembrane segment spans residues 34–56; it reads ASQLVSLTIAFVALYLISSRLAL.

Belongs to the ATPase B chain family. As to quaternary structure, F-type ATPases have 2 components, F(1) - the catalytic core - and F(0) - the membrane proton channel. F(1) has five subunits: alpha(3), beta(3), gamma(1), delta(1), epsilon(1). F(0) has three main subunits: a(1), b(2) and c(10-14). The alpha and beta chains form an alternating ring which encloses part of the gamma chain. F(1) is attached to F(0) by a central stalk formed by the gamma and epsilon chains, while a peripheral stalk is formed by the delta and b chains.

It is found in the cell inner membrane. F(1)F(0) ATP synthase produces ATP from ADP in the presence of a proton or sodium gradient. F-type ATPases consist of two structural domains, F(1) containing the extramembraneous catalytic core and F(0) containing the membrane proton channel, linked together by a central stalk and a peripheral stalk. During catalysis, ATP synthesis in the catalytic domain of F(1) is coupled via a rotary mechanism of the central stalk subunits to proton translocation. In terms of biological role, component of the F(0) channel, it forms part of the peripheral stalk, linking F(1) to F(0). The b'-subunit is a diverged and duplicated form of b found in plants and photosynthetic bacteria. The protein is ATP synthase subunit b 2 (atpF2) of Nitrobacter hamburgensis (strain DSM 10229 / NCIMB 13809 / X14).